The sequence spans 90 residues: Probable Fe(2+)-trafficking protein (90 aa).

This sequence belongs to the Fe(2+)-trafficking protein family.

In terms of biological role, could be a mediator in iron transactions between iron acquisition and iron-requiring processes, such as synthesis and/or repair of Fe-S clusters in biosynthetic enzymes. The chain is Probable Fe(2+)-trafficking protein from Xylella fastidiosa (strain 9a5c).